Here is a 522-residue protein sequence, read N- to C-terminus: GMP synthase [glutamine-hydrolyzing] (522 aa).

One can recognise a Glutamine amidotransferase type-1 domain in the interval 5-204 (YILIIDFGSQ…VKNICNYTNV (200 aa)). C82 functions as the Nucleophile in the catalytic mechanism. Catalysis depends on residues H178 and E180. A GMPS ATP-PPase domain is found at 205–397 (IKYSLSIRKI…IGIPKEIIFR (193 aa)). 232-238 (SGGIDSF) contacts ATP.

As to quaternary structure, homodimer.

The enzyme catalyses XMP + L-glutamine + ATP + H2O = GMP + L-glutamate + AMP + diphosphate + 2 H(+). The protein operates within purine metabolism; GMP biosynthesis; GMP from XMP (L-Gln route): step 1/1. Its function is as follows. Catalyzes the synthesis of GMP from XMP. The polypeptide is GMP synthase [glutamine-hydrolyzing] (Wigglesworthia glossinidia brevipalpis).